Reading from the N-terminus, the 344-residue chain is Uroporphyrinogen decarboxylase (344 aa).

Residues 25–29 (RQAGR), D75, Y152, S207, and H323 each bind substrate.

It belongs to the uroporphyrinogen decarboxylase family. Homodimer.

It localises to the cytoplasm. It carries out the reaction uroporphyrinogen III + 4 H(+) = coproporphyrinogen III + 4 CO2. It participates in porphyrin-containing compound metabolism; protoporphyrin-IX biosynthesis; coproporphyrinogen-III from 5-aminolevulinate: step 4/4. Its function is as follows. Catalyzes the decarboxylation of four acetate groups of uroporphyrinogen-III to yield coproporphyrinogen-III. This chain is Uroporphyrinogen decarboxylase, found in Ruegeria pomeroyi (strain ATCC 700808 / DSM 15171 / DSS-3) (Silicibacter pomeroyi).